The following is a 339-amino-acid chain: Very-long-chain 3-oxoacyl-CoA reductase (339 aa).

Residues 21 to 41 (WTTFLLALGSFNALRIIYQTL) form a helical membrane-spanning segment. NADP(+) contacts are provided by valine 67, asparagine 96, aspartate 121, asparagine 148, tyrosine 215, lysine 219, valine 248, and serine 250. Tyrosine 215 serves as the catalytic Proton acceptor. Residue lysine 219 is the Lowers pKa of active site Tyr of the active site.

It belongs to the short-chain dehydrogenases/reductases (SDR) family.

It is found in the endoplasmic reticulum membrane. The enzyme catalyses a very-long-chain (3R)-3-hydroxyacyl-CoA + NADP(+) = a very-long-chain 3-oxoacyl-CoA + NADPH + H(+). It participates in lipid metabolism; fatty acid biosynthesis. Its function is as follows. Component of the microsomal membrane bound fatty acid elongation system, which produces the 26-carbon very long-chain fatty acids (VLCFA) from palmitate. Catalyzes the reduction of the 3-ketoacyl-CoA intermediate that is formed in each cycle of fatty acid elongation. VLCFAs serve as precursors for ceramide and sphingolipids. This is Very-long-chain 3-oxoacyl-CoA reductase from Coprinopsis cinerea (strain Okayama-7 / 130 / ATCC MYA-4618 / FGSC 9003) (Inky cap fungus).